The primary structure comprises 311 residues: Pyrimidine-specific ribonucleoside hydrolase RihA (311 aa).

Residue His-240 is part of the active site.

This sequence belongs to the IUNH family. RihA subfamily.

Hydrolyzes with equal efficiency cytidine or uridine to ribose and cytosine or uracil, respectively. The chain is Pyrimidine-specific ribonucleoside hydrolase RihA from Escherichia coli O7:K1 (strain IAI39 / ExPEC).